The sequence spans 869 residues: Probable beta-glucosidase F (869 aa).

An N-terminal signal peptide occupies residues 1 to 19 (MRVLSAIALVASLASSALS). N-linked (GlcNAc...) asparagine glycosylation is found at asparagine 77 and asparagine 261. The active site involves aspartate 289. N-linked (GlcNAc...) asparagine glycans are attached at residues asparagine 332, asparagine 364, asparagine 399, and asparagine 478. Residues 677–697 (STYPPTRPPKGPTPTYPTAIP) are disordered. The segment covering 681–691 (PTRPPKGPTPT) has biased composition (pro residues). N-linked (GlcNAc...) asparagine glycosylation occurs at asparagine 728.

It belongs to the glycosyl hydrolase 3 family.

The protein resides in the secreted. It carries out the reaction Hydrolysis of terminal, non-reducing beta-D-glucosyl residues with release of beta-D-glucose.. The protein operates within glycan metabolism; cellulose degradation. Beta-glucosidases are one of a number of cellulolytic enzymes involved in the degradation of cellulosic biomass. Catalyzes the last step releasing glucose from the inhibitory cellobiose. In Aspergillus fumigatus (strain ATCC MYA-4609 / CBS 101355 / FGSC A1100 / Af293) (Neosartorya fumigata), this protein is Probable beta-glucosidase F (bglF).